The sequence spans 146 residues: ATP synthase epsilon chain (146 aa).

Belongs to the ATPase epsilon chain family. In terms of assembly, F-type ATPases have 2 components, CF(1) - the catalytic core - and CF(0) - the membrane proton channel. CF(1) has five subunits: alpha(3), beta(3), gamma(1), delta(1), epsilon(1). CF(0) has three main subunits: a, b and c.

It localises to the cell membrane. Produces ATP from ADP in the presence of a proton gradient across the membrane. The protein is ATP synthase epsilon chain of Lactobacillus helveticus (strain DPC 4571).